The following is a 379-amino-acid chain: Anomalous homeobox protein (379 aa).

The homeobox DNA-binding region spans 135–196 (PEGLKSRNFP…NYRRRQRALP (62 aa)). The interval 195 to 283 (LPQHMKPAQQ…SKPLDVSGHP (89 aa)) is disordered. A compositionally biased stretch (basic and acidic residues) spans 237–246 (QWSEEREEKG).

It localises to the nucleus. The polypeptide is Anomalous homeobox protein (ANHX) (Homo sapiens (Human)).